The following is a 477-amino-acid chain: Aspartyl/glutamyl-tRNA(Asn/Gln) amidotransferase subunit B (477 aa).

It belongs to the GatB/GatE family. GatB subfamily. As to quaternary structure, heterotrimer of A, B and C subunits.

The catalysed reaction is L-glutamyl-tRNA(Gln) + L-glutamine + ATP + H2O = L-glutaminyl-tRNA(Gln) + L-glutamate + ADP + phosphate + H(+). The enzyme catalyses L-aspartyl-tRNA(Asn) + L-glutamine + ATP + H2O = L-asparaginyl-tRNA(Asn) + L-glutamate + ADP + phosphate + 2 H(+). Its function is as follows. Allows the formation of correctly charged Asn-tRNA(Asn) or Gln-tRNA(Gln) through the transamidation of misacylated Asp-tRNA(Asn) or Glu-tRNA(Gln) in organisms which lack either or both of asparaginyl-tRNA or glutaminyl-tRNA synthetases. The reaction takes place in the presence of glutamine and ATP through an activated phospho-Asp-tRNA(Asn) or phospho-Glu-tRNA(Gln). The protein is Aspartyl/glutamyl-tRNA(Asn/Gln) amidotransferase subunit B of Legionella pneumophila (strain Corby).